The sequence spans 221 residues: Ribosomal RNA large subunit methyltransferase E (221 aa).

S-adenosyl-L-methionine is bound by residues glycine 60, tryptophan 62, aspartate 89, aspartate 105, and aspartate 134. Catalysis depends on lysine 174, which acts as the Proton acceptor. The interval 199–221 is disordered; the sequence is KPKASRDKSSETFLLGRQLKHPG.

The protein belongs to the class I-like SAM-binding methyltransferase superfamily. RNA methyltransferase RlmE family.

It localises to the cytoplasm. The enzyme catalyses uridine(2552) in 23S rRNA + S-adenosyl-L-methionine = 2'-O-methyluridine(2552) in 23S rRNA + S-adenosyl-L-homocysteine + H(+). In terms of biological role, specifically methylates the uridine in position 2552 of 23S rRNA at the 2'-O position of the ribose in the fully assembled 50S ribosomal subunit. This chain is Ribosomal RNA large subunit methyltransferase E, found in Ralstonia pickettii (strain 12J).